We begin with the raw amino-acid sequence, 174 residues long: ATP synthase subunit delta (174 aa).

The protein belongs to the ATPase delta chain family. In terms of assembly, F-type ATPases have 2 components, F(1) - the catalytic core - and F(0) - the membrane proton channel. F(1) has five subunits: alpha(3), beta(3), gamma(1), delta(1), epsilon(1). F(0) has three main subunits: a(1), b(2) and c(10-14). The alpha and beta chains form an alternating ring which encloses part of the gamma chain. F(1) is attached to F(0) by a central stalk formed by the gamma and epsilon chains, while a peripheral stalk is formed by the delta and b chains.

Its subcellular location is the cell inner membrane. Its function is as follows. F(1)F(0) ATP synthase produces ATP from ADP in the presence of a proton or sodium gradient. F-type ATPases consist of two structural domains, F(1) containing the extramembraneous catalytic core and F(0) containing the membrane proton channel, linked together by a central stalk and a peripheral stalk. During catalysis, ATP synthesis in the catalytic domain of F(1) is coupled via a rotary mechanism of the central stalk subunits to proton translocation. This protein is part of the stalk that links CF(0) to CF(1). It either transmits conformational changes from CF(0) to CF(1) or is implicated in proton conduction. The polypeptide is ATP synthase subunit delta (Fusobacterium nucleatum subsp. nucleatum (strain ATCC 25586 / DSM 15643 / BCRC 10681 / CIP 101130 / JCM 8532 / KCTC 2640 / LMG 13131 / VPI 4355)).